A 564-amino-acid chain; its full sequence is Phosphoinositide phospholipase C 3 (564 aa).

Residues 19–54 (TRQPPVSIKRLFEAYSRNGKMSFDELLRFVSEVQGE) enclose the EF-hand domain. Residues 106-250 (HDMKAPLSHY…LKGKILISTK (145 aa)) enclose the PI-PLC X-box domain. Active-site residues include His121 and His167. The PI-PLC Y-box domain occupies 296–412 (RDLIAIHAAN…GYVKKPRILL (117 aa)). The 134-residue stretch at 406-539 (KKPRILLDEH…KSGVRAVRLH (134 aa)) folds into the C2 domain. 5 residues coordinate Ca(2+): Asp450, Asp456, Asp509, Asp511, and Asp517.

The cofactor is Ca(2+). As to expression, expressed in leaves, roots and siliques, but not in flowers.

The protein resides in the cell membrane. It carries out the reaction a 1,2-diacyl-sn-glycero-3-phospho-(1D-myo-inositol-4,5-bisphosphate) + H2O = 1D-myo-inositol 1,4,5-trisphosphate + a 1,2-diacyl-sn-glycerol + H(+). Its function is as follows. The production of the second messenger molecules diacylglycerol (DAG) and inositol 1,4,5-trisphosphate (IP3) is mediated by activated phosphatidylinositol-specific phospholipase C enzymes. The protein is Phosphoinositide phospholipase C 3 (PLC3) of Arabidopsis thaliana (Mouse-ear cress).